Consider the following 153-residue polypeptide: Coiled-coil-helix-coiled-coil-helix domain-containing protein 2 (153 aa).

2 disordered regions span residues 1–51 (MPRG…AAPR) and 78–106 (HAIT…QGAQ). Residues 14-51 (PPASRAPQMRAAPRRAPAAQPPAAAAPSAVGSPAAAPR) show a composition bias toward low complexity. Residues 113–153 (FGPCSLEIKQFLECAQNQSDVKLCEGFNEVLRQCRIANGLM) form the CHCH domain. Short sequence motifs (cx9C motif) lie at residues 116–126 (CSLEIKQFLEC) and 136–146 (CEGFNEVLRQC). 2 disulfides stabilise this stretch: C116–C146 and C126–C136.

Interacts with RBPJ.

It is found in the nucleus. It localises to the mitochondrion. Its subcellular location is the mitochondrion intermembrane space. Transcription factor. Binds to the oxygen responsive element of COX4I2 and activates its transcription under hypoxia conditions (4% oxygen), as well as normoxia conditions (20% oxygen). This chain is Coiled-coil-helix-coiled-coil-helix domain-containing protein 2 (Chchd2), found in Mus musculus (Mouse).